The primary structure comprises 87 residues: Acetolactate synthase isozyme 2 small subunit (87 aa).

An ACT domain is found at 5–78 (QVNVSARFNP…DVAHVAICQS (74 aa)).

As to quaternary structure, tetramer of two large and two small chains. The cofactor is Mg(2+). Thiamine diphosphate serves as cofactor.

The catalysed reaction is 2 pyruvate + H(+) = (2S)-2-acetolactate + CO2. It functions in the pathway amino-acid biosynthesis; L-isoleucine biosynthesis; L-isoleucine from 2-oxobutanoate: step 1/4. The protein operates within amino-acid biosynthesis; L-valine biosynthesis; L-valine from pyruvate: step 1/4. The sequence is that of Acetolactate synthase isozyme 2 small subunit (ilvM) from Escherichia coli O6:H1 (strain CFT073 / ATCC 700928 / UPEC).